We begin with the raw amino-acid sequence, 887 residues long: Alanine--tRNA ligase (887 aa).

Residues H564, H568, C676, and H680 each coordinate Zn(2+).

This sequence belongs to the class-II aminoacyl-tRNA synthetase family. Requires Zn(2+) as cofactor.

The protein localises to the cytoplasm. It catalyses the reaction tRNA(Ala) + L-alanine + ATP = L-alanyl-tRNA(Ala) + AMP + diphosphate. Its function is as follows. Catalyzes the attachment of alanine to tRNA(Ala) in a two-step reaction: alanine is first activated by ATP to form Ala-AMP and then transferred to the acceptor end of tRNA(Ala). Also edits incorrectly charged Ser-tRNA(Ala) and Gly-tRNA(Ala) via its editing domain. This is Alanine--tRNA ligase from Sinorhizobium medicae (strain WSM419) (Ensifer medicae).